The primary structure comprises 489 residues: MANDVSGLGPTAFVRLLAFHLIGLFVSITVYRLFFHNLSGFRGPFIARLSSFYLAWLSAKRLHLHDEIDDLHSLYGDYVRTGPRELSIIDPQCVQVIYGSQTKCIKGPIYTLLDPRTNLSSTRDKTEHAKRRRAWDRGFSTTALHTYEPMVQELTEELMTIIDELSENPINITEWVDKYAFEVMGQLTFGKPFNMLKERKEAYFLELIRQDMNAIGYLLNLPWLSYLFLRTPGLNQNHLNFWRWIENEFAQRIARGQRRPDVFNWLHQAYLQGPQTKSDTLKLHGDGYLVIVAGSDTTASTITHLLFYLACNKALTQKLQAQLDALEGLTDESLRDVELLDACINETLRLRPAVPAGVQRETPKEGIYIGNRYIPGDTIVKVPMYTLFRDPRSFEQPNEFIPERFTTRPELVKDKSVFIPFLTGSYACVGRRLALMEVRRAVAAILCRYDIALAPGQNEEGFLDGKIDAFTLVAAPLSLKFTRRHQQKQ.

Residues 13 to 35 (FVRLLAFHLIGLFVSITVYRLFF) form a helical membrane-spanning segment. N-linked (GlcNAc...) asparagine glycosylation is found at Asn37, Asn118, Asn171, and Asn345. Residue Cys428 coordinates heme.

Belongs to the cytochrome P450 family. Heme is required as a cofactor.

It localises to the membrane. It participates in mycotoxin biosynthesis. Cytochrome P450 monooxygenase; part of the gene cluster that mediates the biosynthesis of brefeldin A (BFA), a protein transport inhibitor that shows antiviral, antifungal, and antitumor properties. The proposed biosynthesis of BFA involves formation of an acyclic polyketide chain that is differentially tailored throughout the backbone. The highly reducing polyketide synthase Bref-PKS is proposed to synthesize the precisely reduced octaketide precursor, which could then be directly offloaded by the thiohydrolase enzyme Bref-TH followed by a cytochrome P450 monooxygenase-mediated formation of the cyclopentane ring and macrocyclization to afford 7-deoxy BFA. Alternatively, the first ring annulation can also occur on the ACP-tethered intermediate before the thiohydrolase release and lactonization. The C7-hydroxylation by another cytochrome P450 monooxygenase is believed to be the final step in the process to obtain the final structure of BFA. In addition to the HRPKS Bref-PKS and the thiohydrolase Bref-TH, the brefeldin A biosynthesis cluster contains 4 cytochrome p450 monooxygenases (called orf3 to orf6), as well a the probable cluster-specific transcription regulator orf8. The polypeptide is Cytochrome P450 monooxygenase orf5 (Eupenicillium brefeldianum (Penicillium brefeldianum)).